We begin with the raw amino-acid sequence, 84 residues long: Conotoxin Tx8.1 (84 aa).

An N-terminal signal peptide occupies residues 1–19 (LKMGAMFVLLLLFTLASSH). The propeptide occupies 20-44 (REGDIQARKTHLKSDFYRTLPRFAR).

It belongs to the conotoxin S superfamily. Contains 5 disulfide bonds. Expressed by the venom duct.

It localises to the secreted. This is Conotoxin Tx8.1 from Conus textile (Cloth-of-gold cone).